We begin with the raw amino-acid sequence, 215 residues long: 3-demethoxyubiquinol 3-hydroxylase (215 aa).

Positions 64, 94, 97, 146, 178, and 181 each coordinate Fe cation.

This sequence belongs to the COQ7 family. Fe cation serves as cofactor.

It localises to the cell membrane. It carries out the reaction a 5-methoxy-2-methyl-3-(all-trans-polyprenyl)benzene-1,4-diol + AH2 + O2 = a 3-demethylubiquinol + A + H2O. It functions in the pathway cofactor biosynthesis; ubiquinone biosynthesis. Catalyzes the hydroxylation of 2-nonaprenyl-3-methyl-6-methoxy-1,4-benzoquinol during ubiquinone biosynthesis. The polypeptide is 3-demethoxyubiquinol 3-hydroxylase (Bordetella avium (strain 197N)).